Consider the following 311-residue polypeptide: Cell division protein ZipA (311 aa).

Over 1 to 5 the chain is Periplasmic; the sequence is MQELR. The chain crosses the membrane as a helical span at residues 6-26; the sequence is FVLIVVGALAIMALLFHGLWT. Residues 27–311 lie on the Cytoplasmic side of the membrane; it reads SKKEGKAKFG…QIVEFKAANA (285 aa). Over residues 32 to 54 the composition is skewed to basic and acidic residues; it reads KAKFGDKPLSKLDLGESEPKESE. A disordered region spans residues 32–60; the sequence is KAKFGDKPLSKLDLGESEPKESEMYVAPE.

The protein belongs to the ZipA family. As to quaternary structure, interacts with FtsZ via their C-terminal domains.

The protein localises to the cell inner membrane. Functionally, essential cell division protein that stabilizes the FtsZ protofilaments by cross-linking them and that serves as a cytoplasmic membrane anchor for the Z ring. Also required for the recruitment to the septal ring of downstream cell division proteins. This chain is Cell division protein ZipA, found in Vibrio vulnificus (strain YJ016).